We begin with the raw amino-acid sequence, 185 residues long: Tetrahydromethanopterin S-methyltransferase subunit A 2 (185 aa).

Residues 1–21 lie on the Cytoplasmic side of the membrane; that stretch reads MVDKKVDKKPVPEDWPHIVGD. A helical transmembrane segment spans residues 22–38; that stretch reads YVVGDAESPVAVVTLGS. Topologically, residues 39–185 are extracellular; the sequence is HMEDEPVRAG…LNKNKPDENT (147 aa). A 5-hydroxybenzimidazolylcob(I)amide-binding site is contributed by H88.

The protein belongs to the MtrA family. As to quaternary structure, the complex is composed of 8 subunits; MtrA, MtrB, MtrC, MtrD, MtrE, MtrF, MtrG and MtrH. 5-hydroxybenzimidazolylcob(I)amide serves as cofactor.

The protein resides in the cell membrane. The catalysed reaction is 5-methyl-5,6,7,8-tetrahydromethanopterin + coenzyme M + 2 Na(+)(in) = 5,6,7,8-tetrahydromethanopterin + methyl-coenzyme M + 2 Na(+)(out). It participates in one-carbon metabolism; methanogenesis from CO(2); methyl-coenzyme M from 5,10-methylene-5,6,7,8-tetrahydromethanopterin: step 2/2. Its function is as follows. Part of a complex that catalyzes the formation of methyl-coenzyme M and tetrahydromethanopterin from coenzyme M and methyl-tetrahydromethanopterin. This is an energy-conserving, sodium-ion translocating step. In Methanothermobacter marburgensis (strain ATCC BAA-927 / DSM 2133 / JCM 14651 / NBRC 100331 / OCM 82 / Marburg) (Methanobacterium thermoautotrophicum), this protein is Tetrahydromethanopterin S-methyltransferase subunit A 2.